We begin with the raw amino-acid sequence, 201 residues long: Imidazole glycerol phosphate synthase subunit HisH (201 aa).

One can recognise a Glutamine amidotransferase type-1 domain in the interval 1–201 (MIAIIDYGAG…LLKRYEEMIR (201 aa)). The Nucleophile role is filled by C79. Catalysis depends on residues H181 and E183.

Heterodimer of HisH and HisF.

Its subcellular location is the cytoplasm. It carries out the reaction 5-[(5-phospho-1-deoxy-D-ribulos-1-ylimino)methylamino]-1-(5-phospho-beta-D-ribosyl)imidazole-4-carboxamide + L-glutamine = D-erythro-1-(imidazol-4-yl)glycerol 3-phosphate + 5-amino-1-(5-phospho-beta-D-ribosyl)imidazole-4-carboxamide + L-glutamate + H(+). It catalyses the reaction L-glutamine + H2O = L-glutamate + NH4(+). Its pathway is amino-acid biosynthesis; L-histidine biosynthesis; L-histidine from 5-phospho-alpha-D-ribose 1-diphosphate: step 5/9. IGPS catalyzes the conversion of PRFAR and glutamine to IGP, AICAR and glutamate. The HisH subunit catalyzes the hydrolysis of glutamine to glutamate and ammonia as part of the synthesis of IGP and AICAR. The resulting ammonia molecule is channeled to the active site of HisF. This is Imidazole glycerol phosphate synthase subunit HisH from Oceanobacillus iheyensis (strain DSM 14371 / CIP 107618 / JCM 11309 / KCTC 3954 / HTE831).